Reading from the N-terminus, the 448-residue chain is Trigger factor (448 aa).

Positions 172–257 constitute a PPIase FKBP-type domain; that stretch reads GDRVTVDFVG…MKKIEWPHLP (86 aa).

Belongs to the FKBP-type PPIase family. Tig subfamily.

The protein resides in the cytoplasm. The catalysed reaction is [protein]-peptidylproline (omega=180) = [protein]-peptidylproline (omega=0). In terms of biological role, involved in protein export. Acts as a chaperone by maintaining the newly synthesized protein in an open conformation. Functions as a peptidyl-prolyl cis-trans isomerase. In Burkholderia cenocepacia (strain HI2424), this protein is Trigger factor.